A 290-amino-acid chain; its full sequence is S-methyl-5'-thioadenosine phosphorylase 2 (290 aa).

Residues serine 14, 57-58, and 90-91 each bind phosphate; these read RH and SA. Methionine 185 is a binding site for substrate. Serine 186 contacts phosphate. 209 to 211 provides a ligand contact to substrate; sequence DYD.

This sequence belongs to the PNP/MTAP phosphorylase family. MTAP subfamily. In terms of assembly, homotrimer.

The protein localises to the cytoplasm. The protein resides in the nucleus. The catalysed reaction is S-methyl-5'-thioadenosine + phosphate = 5-(methylsulfanyl)-alpha-D-ribose 1-phosphate + adenine. It functions in the pathway amino-acid biosynthesis; L-methionine biosynthesis via salvage pathway; S-methyl-5-thio-alpha-D-ribose 1-phosphate from S-methyl-5'-thioadenosine (phosphorylase route): step 1/1. In terms of biological role, catalyzes the reversible phosphorylation of S-methyl-5'-thioadenosine (MTA) to adenine and 5-methylthioribose-1-phosphate. Involved in the breakdown of MTA, a major by-product of polyamine biosynthesis. Responsible for the first step in the methionine salvage pathway after MTA has been generated from S-adenosylmethionine. Has broad substrate specificity with 6-aminopurine nucleosides as preferred substrates. This is S-methyl-5'-thioadenosine phosphorylase 2 from Puccinia graminis f. sp. tritici (strain CRL 75-36-700-3 / race SCCL) (Black stem rust fungus).